The following is a 148-amino-acid chain: 3-dehydroquinate dehydratase (148 aa).

Positions 74, 80, and 87 each coordinate substrate. Residue histidine 100 is the Proton donor of the active site. Substrate-binding positions include 101–102 (LS) and arginine 111.

Belongs to the type-II 3-dehydroquinase family. Homododecamer.

It catalyses the reaction 3-dehydroquinate = 3-dehydroshikimate + H2O. The protein operates within metabolic intermediate biosynthesis; chorismate biosynthesis; chorismate from D-erythrose 4-phosphate and phosphoenolpyruvate: step 3/7. The chain is 3-dehydroquinate dehydratase (yqhS) from Bacillus subtilis (strain 168).